Consider the following 228-residue polypeptide: Cytochrome b5 domain-containing protein 1 (228 aa).

The region spanning 17 to 83 (RRYFTPAEVA…DPKTRDIRKH (67 aa)) is the Cytochrome b5 heme-binding domain. Residues tyrosine 52 and histidine 83 each coordinate heme.

It belongs to the cytochrome b5 family.

The protein resides in the cytoplasm. Its subcellular location is the cytoskeleton. The protein localises to the cilium axoneme. In terms of biological role, radial spoke stalk protein that binds heme under oxidizing conditions. Required for the coordinated beating of multiple cilia maybe by functioning in a redox signaling pathway. The polypeptide is Cytochrome b5 domain-containing protein 1 (Homo sapiens (Human)).